The primary structure comprises 80 residues: Large ribosomal subunit protein bL31 (80 aa).

The Zn(2+) site is built by Cys16, Cys18, Cys38, and Cys41.

The protein belongs to the bacterial ribosomal protein bL31 family. Type A subfamily. In terms of assembly, part of the 50S ribosomal subunit. Zn(2+) is required as a cofactor.

Binds the 23S rRNA. In Mycobacterium bovis (strain ATCC BAA-935 / AF2122/97), this protein is Large ribosomal subunit protein bL31.